Here is a 549-residue protein sequence, read N- to C-terminus: Neutral amino acid transporter 9 (549 aa).

The segment at 1 to 27 (MDEDSKPLLGSVPTGDYYTDSLDPKQR) is disordered. Over 1–107 (MDEDSKPLLG…GGDSPIKNPS (107 aa)) the chain is Cytoplasmic. The helical transmembrane segment at 108–128 (IVTIFAIWNTMMGTSILSIPW) threads the bilayer. The tract at residues 117 to 122 (TMMGTS) is important for arginine binding and amino acid transport. Serine 122 provides a ligand contact to arginine. Over 129–134 (GIKQAG) the chain is Lumenal. The chain crosses the membrane as a helical span at residues 135 to 155 (FTLGIIIIVLMGLLTLYCCYR). Residues 156–186 (VLKSTKSIPYVDTSDWEFPDVCKYYFGGFGK) are Cytoplasmic-facing. The chain crosses the membrane as a helical span at residues 187-213 (WSSLVFSLVSLIGAMVVYWVLMSNFLF). Residues 214–271 (NTGKFIFNYVHNVNTSDAFGTNGTERVICPYPDVDPHGNSSTSLYSGSDNSTGLEFDH) are Lumenal-facing. Residues asparagine 227, asparagine 235, asparagine 252, and asparagine 263 are each glycosylated (N-linked (GlcNAc...) asparagine). A disulfide bond links cysteine 242 and cysteine 412. Residues 272–288 (WWSKTNTIPFYLILLLL) form a helical membrane-spanning segment. Residues 289–297 (PLLNFRSAS) lie on the Cytoplasmic side of the membrane. Residues 298–322 (FFARFTFLGTISVIYLIFLVTYKAI) form a helical membrane-spanning segment. Topologically, residues 323-344 (QLGFHLEFHWFDSSMFFVPEFR) are lumenal. Residues 345-365 (TLFPQLSGVLTLAFFIHNCII) form a helical membrane-spanning segment. Residues 366–382 (TLMKNNKHQENNVRDLS) lie on the Cytoplasmic side of the membrane. A helical transmembrane segment spans residues 383–403 (LAYLLVGLTYLYVGVLIFAAF). Over 404–425 (PSPPLSKECIEPNFLDNFPSSD) the chain is Lumenal. Residues 426-446 (ILVFVARTFLLFQMTTVYPLL) form a helical membrane-spanning segment. Residues 432 to 442 (RTFLLFQMTTV) carry the CARC motif motif. The CRAC motif motif lies at 445–451 (LLGYLVR). The Cytoplasmic portion of the chain corresponds to 447 to 467 (GYLVRVQLMGQIFGNHYPGFL). Residues 468-488 (HVFVLNVFVVGAGVLMARFYP) form a helical membrane-spanning segment. The Lumenal portion of the chain corresponds to 489-495 (NIGSIIR). The chain crosses the membrane as a helical span at residues 496–516 (YSGALCGLALVFVLPSLIHMV). At 517–528 (SLKRRGELRWTS) the chain is on the cytoplasmic side. Residues 529–549 (TLFHGFLILLGVANLLGQFFM) traverse the membrane as a helical segment.

The protein belongs to the amino acid/polyamine transporter 2 family. SLC38A9 subfamily. In terms of assembly, associated component of the Ragulator complex. Associated component of the Rag GTPases heterodimers (RRAGA and RRAGC). In terms of processing, glycosylated.

The protein localises to the lysosome membrane. It is found in the late endosome membrane. It catalyses the reaction L-leucine(in) = L-leucine(out). The enzyme catalyses L-tyrosine(in) = L-tyrosine(out). The catalysed reaction is L-glutamine(out) = L-glutamine(in). It carries out the reaction L-asparagine(out) = L-asparagine(in). Amino acid transport activity is increased by sodium. Transport of L-glutamine, leucine and tyrosine is increased by arginine binding. Functionally, lysosomal amino acid transporter involved in the activation of mTORC1 in response to amino acid levels. Probably acts as an amino acid sensor of the Rag GTPases and Ragulator complexes, 2 complexes involved in amino acid sensing and activation of mTORC1, a signaling complex promoting cell growth in response to growth factors, energy levels, and amino acids. Following activation by amino acids, the Ragulator and Rag GTPases function as a scaffold recruiting mTORC1 to lysosomes where it is in turn activated. SLC38A9 mediates transport of amino acids with low capacity and specificity with a slight preference for polar amino acids. Acts as an arginine sensor. Following activation by arginine binding, mediates transport of L-glutamine, leucine and tyrosine with high efficiency, and is required for the efficient utilization of these amino acids after lysosomal protein degradation. However, the transport mechanism is not well defined and the role of sodium is not clear. Guanine exchange factor (GEF) that, upon arginine binding, stimulates GDP release from RRAGA and therefore activates the Rag GTPase heterodimer and the mTORC1 pathway in response to nutrient sufficiency. This chain is Neutral amino acid transporter 9, found in Danio rerio (Zebrafish).